Here is a 150-residue protein sequence, read N- to C-terminus: Transmembrane protein 35B (150 aa).

The N-terminal stretch at 1-21 is a signal peptide; that stretch reads MSFRVGVLRVLLGVFFALTGA. The next 3 helical transmembrane spans lie at 62 to 82, 84 to 104, and 111 to 131; these read TAVGWLELLAGLLLVVGPPVL, EISNVLLILLMMGAVFTLVVL, and YVPAAVCLGLLLLLDSCHFLA.

Belongs to the DoxX family.

It is found in the membrane. The sequence is that of Transmembrane protein 35B from Mus musculus (Mouse).